Reading from the N-terminus, the 636-residue chain is Ketocytochalasin monooxygenase (636 aa).

FAD contacts are provided by residues aspartate 125, 133 to 136, aspartate 145, tyrosine 151, and isoleucine 195; that span reads TWYW. 143–145 provides a ligand contact to NADP(+); the sequence is ACD. NADP(+) is bound by residues 279-285, 302-303, and 420-421; these read TGASAVQ, RT, and KR. Tryptophan 534 serves as a coordination point for FAD.

This sequence belongs to the FAD-binding monooxygenase family. FAD is required as a cofactor.

The catalysed reaction is ketocytochalasin + NADPH + O2 + H(+) = iso-precytochalasin + NADP(+) + H2O. It catalyses the reaction iso-precytochalasin + NADPH + O2 + H(+) = cytochalasin Z16 + NADP(+) + H2O. The protein operates within mycotoxin biosynthesis. Functionally, ketocytochalasin monooxygenase; part of the gene cluster that mediates the biosynthesis of a family of the mycotoxins cytochalasins E and K. The hybrid PKS-NRPS synthetase ccsA and the enoyl reductase ccsC are responsible for fusion of phenylalanine with an octaketide backbone and subsequent release of the stable tetramic acid precursor. The polyketide synthase module (PKS) of the PKS-NRPS ccsA is responsible for the synthesis of the octaketide backbone. The downstream nonribosomal peptide synthetase (NRPS) amidates the carboxyl end of the octaketide with a phenylalanine. A reductase-like domain (R) at the C-terminus catalyzes the reductive release of the polyketide-amino acid intermediate. Because ccsA lacks a designated enoylreductase (ER) domain, the required activity is provided the enoyl reductase ccsC. Upon formation of the 11-membered carbocycle-fused perhydroisoindolone intermediate, a number of oxidative steps are required to afford the final cytochalasin E and K, including two hydroxylations at C17 and C18, one alcohol oxidation at C17, one epoxidation at C6 and C7 and two Baeyer-Villiger oxidations. The oxidative modification at C17, C18 and the C6-C7 epoxidation are likely to be catalyzed by the two cytochrome P450 oxygenases ccsD and ccsG. CcsD may be responsible for the epoxidation of the C6-C7 double bond. CcsG may be responsible for the successive oxidative modifications at C17 and C18. The double Baeyer-Villiger oxidations of ketocytochalasin to precytochalasin and cytochalasin Z(16) are among the final steps leading to cytochalasin E and K and are catalyzed by ccsB. The first oxygen insertion step follows that of the classic BVMO mechanism, generating the ester precytochalasin. Release of precytochalasin into an aqueous environment can generate the shunt product iso-precytochalasin through spontaneous isomerization. Alternatively, precytochalasin can undergo further oxidation by ccsB to yield the in-line carbonate-containing cytochalasin Z(16). Cytochalasin Z(16) is a precursor to cytochalasin E and cytochalasin K, whereas iso-precytochalasin is a precursor to cytochalasin Z(17) and rosellichalasin. The hydrolyase ccsE may catalyze hydrolysis of epoxide bond in cytochalasin E to afford cytochalasin K. The function of ccsF has not been assigned but it may play a role in post-PKS-NRPS biosynthetic step, resistance or transport of cytochalasins and related PKS-NRPS products. This Aspergillus clavatus (strain ATCC 1007 / CBS 513.65 / DSM 816 / NCTC 3887 / NRRL 1 / QM 1276 / 107) protein is Ketocytochalasin monooxygenase.